A 476-amino-acid chain; its full sequence is Glutamate--tRNA ligase (476 aa).

The 'HIGH' region motif lies at 9-19; it reads PSPTGTLHIGT. Positions 248-252 match the 'KMSKS' region motif; it reads KLSKR. Residue Lys-251 coordinates ATP.

The protein belongs to the class-I aminoacyl-tRNA synthetase family. Glutamate--tRNA ligase type 1 subfamily. Monomer.

It localises to the cytoplasm. It carries out the reaction tRNA(Glu) + L-glutamate + ATP = L-glutamyl-tRNA(Glu) + AMP + diphosphate. In terms of biological role, catalyzes the attachment of glutamate to tRNA(Glu) in a two-step reaction: glutamate is first activated by ATP to form Glu-AMP and then transferred to the acceptor end of tRNA(Glu). The polypeptide is Glutamate--tRNA ligase (Prochlorococcus marinus (strain MIT 9313)).